The following is a 186-amino-acid chain: Threonylcarbamoyl-AMP synthase (186 aa).

Residues 3 to 186 (ELTLDSAVAT…DALSGNVLRS (184 aa)) form the YrdC-like domain.

The protein belongs to the SUA5 family. TsaC subfamily.

The protein resides in the cytoplasm. It carries out the reaction L-threonine + hydrogencarbonate + ATP = L-threonylcarbamoyladenylate + diphosphate + H2O. Its function is as follows. Required for the formation of a threonylcarbamoyl group on adenosine at position 37 (t(6)A37) in tRNAs that read codons beginning with adenine. Catalyzes the conversion of L-threonine, HCO(3)(-)/CO(2) and ATP to give threonylcarbamoyl-AMP (TC-AMP) as the acyladenylate intermediate, with the release of diphosphate. This Stenotrophomonas maltophilia (strain K279a) protein is Threonylcarbamoyl-AMP synthase.